The following is a 236-amino-acid chain: MPAYKRILLKLSGEALMGDDAFGINHATIVRMVEEIAEVTRMGVQVAVVIGGGNIFRGVAGGSVGMDRATADYMGMLATVMNALALGDTMDKAGLIARVMSAIGIERVVEPYVRPKALQYLEEGKVVIFAAGTGNPFFTTDTAAALRGAEIGAEIVLKATKVDGVYTADPKKDPRATRYTNITFDEAMGKNLEVMDATAFALCRDQKLPIKVFSIFKHGALKRVVQGEDEGTLVHV.

10–13 (KLSG) is a binding site for ATP. Gly-52 is a binding site for UMP. Residues Gly-53 and Arg-57 each contribute to the ATP site. UMP is bound by residues Asp-72 and 133-140 (TGNPFFTT). ATP is bound by residues Thr-160, Tyr-166, and Asp-169.

It belongs to the UMP kinase family. Homohexamer.

The protein resides in the cytoplasm. It catalyses the reaction UMP + ATP = UDP + ADP. It functions in the pathway pyrimidine metabolism; CTP biosynthesis via de novo pathway; UDP from UMP (UMPK route): step 1/1. With respect to regulation, inhibited by UTP. In terms of biological role, catalyzes the reversible phosphorylation of UMP to UDP. In Polaromonas sp. (strain JS666 / ATCC BAA-500), this protein is Uridylate kinase.